A 271-amino-acid polypeptide reads, in one-letter code: Phosphonates import ATP-binding protein PhnC 2 (271 aa).

An ABC transporter domain is found at 2–246 (LTVDNLEKTY…ARDEIYRGGE (245 aa)). 35 to 42 (GPSGAGKS) is a binding site for ATP. The segment covering 243-254 (RGGESIADREEP) has biased composition (basic and acidic residues). The tract at residues 243-271 (RGGESIADREEPSAGNSTDADDVIAERGD) is disordered.

Belongs to the ABC transporter superfamily. Phosphonates importer (TC 3.A.1.9.1) family. In terms of assembly, the complex is composed of two ATP-binding proteins (PhnC), two transmembrane proteins (PhnE) and a solute-binding protein (PhnD).

Its subcellular location is the cell membrane. It carries out the reaction phosphonate(out) + ATP + H2O = phosphonate(in) + ADP + phosphate + H(+). Functionally, part of the ABC transporter complex PhnCDE involved in phosphonates import. Responsible for energy coupling to the transport system. The chain is Phosphonates import ATP-binding protein PhnC 2 from Haloarcula marismortui (strain ATCC 43049 / DSM 3752 / JCM 8966 / VKM B-1809) (Halobacterium marismortui).